The following is a 536-amino-acid chain: Multicopper oxidase terE (536 aa).

The segment at 1 to 21 is disordered; that stretch reads MHWHGLSQSTAPFSDGSPQAS. 3 Plastocyanin-like domains span residues 1–67, 79–238, and 354–488; these read MHWH…VEEK, ERIL…LSYN, and TVQK…VWMM. Cu cation-binding residues include H2, H4, H48, and H50. Cu cation is bound at residue H397.

It belongs to the multicopper oxidase family.

Its pathway is secondary metabolite biosynthesis. In terms of biological role, multicopper oxidase; part of the gene cluster that mediates the biosynthesis of terrein, a fungal metabolite with ecological, antimicrobial, antiproliferative, and antioxidative activities. The first step in the pathway is performed by the polyketide synthase terA that produces 4-hydroxy-6-methylpyranon (4-HMP), orsellinic acid (OA), and 2,3-dehydro-6-hydroxymellein (2,3-dehydro-6-HM) by condensing acetyl-CoA with two, three, or four malonyl-CoA units, respectively. 4-HMP and OA are not pathway intermediates, but are rather shunt or side products. 2,3-dehydro-6-HM is further converted to 6-hydroxymellein (6-HM) by the 6-hydroxymellein synthase terB. The monooxygenases terC and terD, the multicopper oxidase terE and the Kelch-like protein terF are then involved in the transformation of 6-HM to terrein. Even if they are co-regulated with the other terrein cluster genes, terH and terI seem to be dispensable for terrein production; whereas one or both of the 2 transporters terG and terJ are probably required for efficient secretion of metabolites. The protein is Multicopper oxidase terE of Aspergillus terreus (strain NIH 2624 / FGSC A1156).